The primary structure comprises 569 residues: MHTLTGFSLVSLLSFGYLSWDWAKPSFVADGPGEAGEQPSAAPPQPPHIIFILTDDQGYHDVGYHGSDIETPTLDRLAAKGVKLENYYIQPICTPSRSQLLTGRYQIHTGLQHSIIRPQQPNCLPLDQVTLPQKLQEAGYSTHMVGKWHLGFYRKECLPTRRGFDTFLGSLTGNVDYYTYDNCDGPGVCGFDLHEGENVAWGLSGQYSTMLYAQRASHILASHSPQRPLFLYVAFQAVHTPLQSPREYLYRYRTMGNVARRKYAAMVTCMDEAVRNITWALKRYGFYNNSVIIFSSDNGGQTFSGGSNWPLRGRKGTYWEGGVRGLGFVHSPLLKRKQRTSRALMHITDWYPTLVGLAGGTTSAADGLDGYDVWPAISEGRASPRTEILHNIDPLYNHAQHGSLEGGFGIWNTAVQAAIRVGEWKLLTGDPGYGDWIPPQTLATFPGSWWNLERMASVRQAVWLFNISADPYEREDLAGQRPDVVRTLLARLAEYNRTAIPVRYPAENPRAHPDFNGGAWGPWASDEEEEEEEGRARSFSRGRRKKKCKICKLRSFFRKLNTRLMSQRI.

The signal sequence occupies residues 1–23 (MHTLTGFSLVSLLSFGYLSWDWA). 3 residues coordinate Ca(2+): aspartate 55, aspartate 56, and cysteine 93. Cysteine 93 (nucleophile) is an active-site residue. Cysteine 93 bears the 3-oxoalanine (Cys) mark. Lysine 147 provides a ligand contact to substrate. Histidine 149 is an active-site residue. Position 239 (histidine 239) interacts with substrate. 2 N-linked (GlcNAc...) asparagine glycosylation sites follow: asparagine 276 and asparagine 288. Ca(2+) is bound by residues aspartate 297 and asparagine 298. Residue lysine 315 coordinates substrate. Residues asparagine 466 and asparagine 496 are each glycosylated (N-linked (GlcNAc...) asparagine). Residues 510–539 (RAHPDFNGGAWGPWASDEEEEEEEGRARSF) form a disordered region.

This sequence belongs to the sulfatase family. Ca(2+) serves as cofactor. In terms of processing, the oxidation of Cys-93 residue to 3-oxoalanine (also known as C(alpha)-formylglycine) by SUMF1/Sulfatase-modifying factor 1, seems critical for catalytic activity. As to expression, expressed in placenta, in embryonic stem cells, fetal eyes and lens.

It is found in the secreted. The protein localises to the endoplasmic reticulum. In terms of biological role, displays arylsulfatase activity at neutral pH, when co-expressed with SUMF1; arylsulfatase activity is measured in the secretion medium of retinal cell line, but no activity is recorded when measured in cell extracts. Lacks arylsulfatase activity. The chain is Arylsulfatase I (ARSI) from Homo sapiens (Human).